The chain runs to 204 residues: High mobility group-T protein (204 aa).

2 DNA-binding regions (HMG box) span residues 8-78 (PRGK…RSYI) and 94-162 (PKRP…TAYR). Positions 162 to 204 (RNKGKVPVSMPAKAAAPAKDDDDDDDDDDDDEDDDDDDDEDDE) are disordered. Residues 181–204 (DDDDDDDDDDDDEDDDDDDDEDDE) show a composition bias toward acidic residues.

It belongs to the HMGB family.

The protein resides in the nucleus. Its subcellular location is the chromosome. In terms of biological role, binds preferentially single-stranded DNA and unwinds double-stranded DNA. The chain is High mobility group-T protein from Oncorhynchus mykiss (Rainbow trout).